Consider the following 134-residue polypeptide: Translation initiation factor 2 subunit beta (134 aa).

It belongs to the eIF-2-beta/eIF-5 family. In terms of assembly, heterotrimer composed of an alpha, a beta and a gamma chain.

Functionally, eIF-2 functions in the early steps of protein synthesis by forming a ternary complex with GTP and initiator tRNA. The chain is Translation initiation factor 2 subunit beta from Pyrobaculum aerophilum (strain ATCC 51768 / DSM 7523 / JCM 9630 / CIP 104966 / NBRC 100827 / IM2).